A 631-amino-acid chain; its full sequence is uncharacterized protein (631 aa).

An N-terminal signal peptide occupies residues 1-20 (MVRFVSILSLFGCAATLVTA). Over 21 to 105 (HDDMDMDMDM…AGNRSALRYH (85 aa)) the chain is Lumenal. 2 N-linked (GlcNAc...) asparagine glycosylation sites follow: asparagine 87 and asparagine 98. A helical transmembrane segment spans residues 106–126 (IITLLLVAFVLYPVSLALSAA). At 127–131 (RSRWY) the chain is on the cytoplasmic side. A helical transmembrane segment spans residues 132 to 152 (LPLLFVNLCICISSVMALSVF). Residues 153–170 (KNTFPEEDWYAHNIYGTT) are Lumenal-facing. The helical transmembrane segment at 171–191 (SVLLLVFMLVHFFAAVLSVPV) threads the bilayer. Topologically, residues 192–322 (SLASKKEYRP…LSCVANVVFH (131 aa)) are cytoplasmic. The interval 216–274 (MVNSARGSPSPSSNRDTLFSLSSDTTTATATNNNKRRRAEGEDEGDNTSNHDTLRDEDY) is disordered. Serine 219 is subject to Phosphoserine. Over residues 220-239 (ARGSPSPSSNRDTLFSLSSD) the composition is skewed to polar residues. Lysine 250 is covalently cross-linked (Glycyl lysine isopeptide (Lys-Gly) (interchain with G-Cter in ubiquitin)). Residues 323 to 343 (MLTYPLFMYIFVDLIIGFAVG) form a helical membrane-spanning segment. Residues 344-351 (NLLGKGIR) lie on the Lumenal side of the membrane. Residues 352-372 (IFNLLAHWIKGGVFFTLGVVS) form a helical membrane-spanning segment. Topologically, residues 373-407 (LARYCGFAAKYGWAWNNISFTSQLTQTRSSNLLFR) are cytoplasmic. A helical transmembrane segment spans residues 408–428 (FAPAGTFTMEFVESFLIFFYG). The Lumenal portion of the chain corresponds to 429–451 (STNIFLEHLAGNGGAWTAKDLQH). Residues 452–472 (VSIAFMFIGTGLCGLLTEYKL) form a helical membrane-spanning segment. The Cytoplasmic portion of the chain corresponds to 473-529 (NHWRFEHARKRPQTDVVAATPGYSPNPFPAFTIFWTGILMSQHAQSSQFSTTIHTQW). Residues 530 to 550 (GYLLSYGSFFRLLTFLILFLV) traverse the membrane as a helical segment. The Lumenal portion of the chain corresponds to 551-598 (PNTNSAASKPFTELITSFCLLCGGLVFMESTDQSIEAMEYRGFTPMFT). The chain crosses the membrane as a helical span at residues 599 to 619 (FNLSVGFVSLLMAWEMILFIW). The Cytoplasmic portion of the chain corresponds to 620–631 (KDWLIKTRKTSL).

This sequence to S.pombe SpBC3B8.06.

The protein resides in the membrane. This is an uncharacterized protein from Saccharomyces cerevisiae (strain ATCC 204508 / S288c) (Baker's yeast).